The chain runs to 72 residues: ATP synthase subunit c (72 aa).

Helical transmembrane passes span 1–21 (MSLG…GAGI) and 48–68 (MFIG…FSFI).

The protein belongs to the ATPase C chain family. As to quaternary structure, F-type ATPases have 2 components, F(1) - the catalytic core - and F(0) - the membrane proton channel. F(1) has five subunits: alpha(3), beta(3), gamma(1), delta(1), epsilon(1). F(0) has three main subunits: a(1), b(2) and c(10-14). The alpha and beta chains form an alternating ring which encloses part of the gamma chain. F(1) is attached to F(0) by a central stalk formed by the gamma and epsilon chains, while a peripheral stalk is formed by the delta and b chains.

It is found in the cell membrane. F(1)F(0) ATP synthase produces ATP from ADP in the presence of a proton or sodium gradient. F-type ATPases consist of two structural domains, F(1) containing the extramembraneous catalytic core and F(0) containing the membrane proton channel, linked together by a central stalk and a peripheral stalk. During catalysis, ATP synthesis in the catalytic domain of F(1) is coupled via a rotary mechanism of the central stalk subunits to proton translocation. In terms of biological role, key component of the F(0) channel; it plays a direct role in translocation across the membrane. A homomeric c-ring of between 10-14 subunits forms the central stalk rotor element with the F(1) delta and epsilon subunits. The protein is ATP synthase subunit c of Bacillus caldotenax.